Consider the following 296-residue polypeptide: 4-diphosphocytidyl-2-C-methyl-D-erythritol kinase (296 aa).

Lys22 is an active-site residue. 105 to 115 is a binding site for ATP; the sequence is PMGGGLGGGSS. Asp147 is an active-site residue.

It belongs to the GHMP kinase family. IspE subfamily.

It catalyses the reaction 4-CDP-2-C-methyl-D-erythritol + ATP = 4-CDP-2-C-methyl-D-erythritol 2-phosphate + ADP + H(+). It functions in the pathway isoprenoid biosynthesis; isopentenyl diphosphate biosynthesis via DXP pathway; isopentenyl diphosphate from 1-deoxy-D-xylulose 5-phosphate: step 3/6. Catalyzes the phosphorylation of the position 2 hydroxy group of 4-diphosphocytidyl-2C-methyl-D-erythritol. This chain is 4-diphosphocytidyl-2-C-methyl-D-erythritol kinase, found in Photobacterium profundum (strain SS9).